The following is a 381-amino-acid chain: L-lactate dehydrogenase A-like 6B (381 aa).

NAD(+)-binding positions include 101–106 and Arg148; that span reads DLDEDK. Substrate-binding residues include Arg155, Asn187, and Arg218. NAD(+) is bound at residue Asn187. His242 acts as the Proton acceptor in catalysis. Thr297 serves as a coordination point for substrate.

This sequence belongs to the LDH/MDH superfamily. LDH family. Testis specific.

It carries out the reaction (S)-lactate + NAD(+) = pyruvate + NADH + H(+). It functions in the pathway fermentation; pyruvate fermentation to lactate; (S)-lactate from pyruvate: step 1/1. The sequence is that of L-lactate dehydrogenase A-like 6B (LDHAL6B) from Homo sapiens (Human).